Consider the following 178-residue polypeptide: Large ribosomal subunit protein uL6 (178 aa).

The protein belongs to the universal ribosomal protein uL6 family. Part of the 50S ribosomal subunit.

Functionally, this protein binds to the 23S rRNA, and is important in its secondary structure. It is located near the subunit interface in the base of the L7/L12 stalk, and near the tRNA binding site of the peptidyltransferase center. This chain is Large ribosomal subunit protein uL6, found in Campylobacter fetus subsp. fetus (strain 82-40).